The following is a 369-amino-acid chain: tRNA pseudouridine synthase D (369 aa).

The active-site Nucleophile is D80. Residues 156-318 form the TRUD domain; that stretch reads GIPNWFGEQR…LKQERRALRL (163 aa).

It belongs to the pseudouridine synthase TruD family.

It catalyses the reaction uridine(13) in tRNA = pseudouridine(13) in tRNA. Responsible for synthesis of pseudouridine from uracil-13 in transfer RNAs. The sequence is that of tRNA pseudouridine synthase D from Xanthomonas euvesicatoria pv. vesicatoria (strain 85-10) (Xanthomonas campestris pv. vesicatoria).